Reading from the N-terminus, the 419-residue chain is Enolase (419 aa).

Glutamine 161 is a binding site for (2R)-2-phosphoglycerate. Catalysis depends on glutamate 205, which acts as the Proton donor. 3 residues coordinate Mg(2+): aspartate 240, glutamate 283, and aspartate 309. Lysine 334, arginine 363, serine 364, and lysine 385 together coordinate (2R)-2-phosphoglycerate. Lysine 334 (proton acceptor) is an active-site residue.

It belongs to the enolase family. Mg(2+) is required as a cofactor.

The protein localises to the cytoplasm. It is found in the secreted. Its subcellular location is the cell surface. The enzyme catalyses (2R)-2-phosphoglycerate = phosphoenolpyruvate + H2O. The protein operates within carbohydrate degradation; glycolysis; pyruvate from D-glyceraldehyde 3-phosphate: step 4/5. In terms of biological role, catalyzes the reversible conversion of 2-phosphoglycerate (2-PG) into phosphoenolpyruvate (PEP). It is essential for the degradation of carbohydrates via glycolysis. The sequence is that of Enolase from Saccharolobus islandicus (strain Y.N.15.51 / Yellowstone #2) (Sulfolobus islandicus).